The primary structure comprises 370 residues: Ganglioside-induced differentiation-associated protein 1-like 1 (370 aa).

Residues 45-129 enclose the GST N-terminal domain; sequence ESLVLYHWTQ…YVERTFTGEH (85 aa). In terms of domain architecture, GST C-terminal spans 177–344; the sequence is PKYATAEIRR…RLVKRKPPSF (168 aa).

The protein belongs to the GST superfamily.

In Mus musculus (Mouse), this protein is Ganglioside-induced differentiation-associated protein 1-like 1 (Gdap1l1).